The chain runs to 1306 residues: Angiotensin-converting enzyme (1306 aa).

The first 28 residues, 1–28 (MGAASGRRSPPLLLPLLLLLLPPPPVIL), serve as a signal peptide directing secretion. Topologically, residues 29-1256 (ELDPALQPGN…GLNLEEQQAR (1228 aa)) are extracellular. Peptidase M2 domains lie at 40 to 624 (PADE…LGWP) and 643 to 1222 (VSDE…LGWP). Asn54, Asn74, Asn111, Asn146, and Asn160 each carry an N-linked (GlcNAc...) asparagine glycan. Cys157 and Cys165 are joined by a disulfide. A chloride-binding site is contributed by Tyr231. An N-linked (GlcNAc...) asparagine glycan is attached at Asn318. Cys359 and Cys377 form a disulfide bridge. A Zn(2+)-binding site is contributed by His390. Glu391 (proton acceptor 1) is an active-site residue. Zn(2+) is bound by residues His394 and Glu418. Residues Asn445 and Asn509 are each glycosylated (N-linked (GlcNAc...) asparagine). His520 serves as the catalytic Proton donor 1. Asn523 is a glycosylation site (N-linked (GlcNAc...) asparagine). Position 529 (Arg529) interacts with chloride. A disulfide bond links Cys545 and Cys557. N-linked (GlcNAc...) asparagine glycans are attached at residues Asn673, Asn695, Asn714, and Asn760. Cys757 and Cys763 are disulfide-bonded. Residues Arg791 and Tyr829 each contribute to the chloride site. N-linked (GlcNAc...) asparagine glycosylation occurs at Asn942. An intrachain disulfide couples Cys957 to Cys975. His988 is a Zn(2+) binding site. Glu989 functions as the Proton acceptor 2 in the catalytic mechanism. 2 residues coordinate Zn(2+): His992 and Glu1016. The chloride site is built by Trp1090 and Arg1094. The Proton donor 2 role is filled by His1118. Position 1127 (Arg1127) interacts with chloride. Cysteines 1143 and 1155 form a disulfide. Asn1191 and Asn1225 each carry an N-linked (GlcNAc...) asparagine glycan. The tract at residues 1215-1256 (HGEKLGWPQYNWTPNSARLEGPFVGSGRVNFLGLNLEEQQAR) is juxtamembrane stalk. Residues 1257–1277 (VGQWVLLFLGVALLVATLGLT) form a helical membrane-spanning segment. Topologically, residues 1278-1306 (QRLFSIRHHSLRRPHRGPQFGSEVELRHS) are cytoplasmic. Ser1299 carries the post-translational modification Phosphoserine.

It belongs to the peptidase M2 family. As to quaternary structure, monomer and homodimer; homodimerizes following binding to an inhibitor. Interacts with calmodulin (CALM1, CALM2 or CALM3); interaction takes place in the cytoplasmic region and regulates phosphorylation and proteolytic cleavage. Requires Zn(2+) as cofactor. Chloride is required as a cofactor. Post-translationally, produced following proteolytic cleavage by secretase enzymes that cleave the transmembrane form in the juxtamembrane stalk region upstream of the transmembrane region. Cleavage can take place at different sites of the juxtamembrane stalk region. In terms of processing, phosphorylated by CK2 on Ser-1299; which allows membrane retention. Phosphorylated on tyrosine residues on its extracellular part, promoting cleavage by secretase enzymes and formation of the soluble form (Angiotensin-converting enzyme, soluble form).

The protein localises to the cell membrane. Its subcellular location is the cytoplasm. It is found in the secreted. The enzyme catalyses Release of a C-terminal dipeptide, oligopeptide-|-Xaa-Yaa, when Xaa is not Pro, and Yaa is neither Asp nor Glu. Thus, conversion of angiotensin I to angiotensin II, with increase in vasoconstrictor activity, but no action on angiotensin II.. The catalysed reaction is angiotensin I + H2O = L-histidyl-L-leucine + angiotensin II. It catalyses the reaction bradykinin + H2O = L-Phe-L-Arg + bradykinin(1-7). It carries out the reaction substance P + H2O = substance P(1-9) + L-Leu-L-Met-NH2. The enzyme catalyses substance P + H2O = substance P(1-8) + Gly-L-Leu-L-Met-NH2. The catalysed reaction is substance P + H2O = L-Phe-L-Phe-Gly-L-Leu-L-Met-NH2 + substance P(1-6). It catalyses the reaction neurotensin + H2O = neurotensin(1-11) + L-isoleucyl-L-leucine. It carries out the reaction goralatide + H2O = N-acetyl-L-seryl-L-aspartate + L-lysyl-L-proline. The enzyme catalyses Met-enkephalin + H2O = L-phenylalanyl-L-methionine + L-tyrosylglycylglycine. The catalysed reaction is Leu-enkephalin + H2O = L-tyrosylglycylglycine + L-phenylalanyl-L-leucine. It catalyses the reaction Met-enkephalin-Arg-Phe + H2O = L-arginyl-L-phenylalanine + Met-enkephalin. Its activity is regulated as follows. The dipeptidyl carboxypeptidase activity is strongly activated by chloride. The dipeptidyl carboxypeptidase activity is specifically inhibited by lisinopril, captopril and enalaprilat. In terms of biological role, dipeptidyl carboxypeptidase that removes dipeptides from the C-terminus of a variety of circulating hormones, such as angiotensin I, bradykinin or enkephalins, thereby playing a key role in the regulation of blood pressure, electrolyte homeostasis or synaptic plasticity. Composed of two similar catalytic domains, each possessing a functional active site, with different selectivity for substrates. Plays a major role in the angiotensin-renin system that regulates blood pressure and sodium retention by the kidney by converting angiotensin I to angiotensin II, resulting in an increase of the vasoconstrictor activity of angiotensin. Also able to inactivate bradykinin, a potent vasodilator, and therefore enhance the blood pressure response. Acts as a regulator of synaptic transmission by mediating cleavage of neuropeptide hormones, such as substance P, neurotensin or enkephalins. Catalyzes degradation of different enkephalin neuropeptides (Met-enkephalin, Leu-enkephalin, Met-enkephalin-Arg-Phe and possibly Met-enkephalin-Arg-Gly-Leu). Acts as a regulator of synaptic plasticity in the nucleus accumbens of the brain by mediating cleavage of Met-enkephalin-Arg-Phe, a strong ligand of Mu-type opioid receptor OPRM1, into Met-enkephalin. Met-enkephalin-Arg-Phe cleavage by ACE decreases activation of OPRM1, leading to long-term synaptic potentiation of glutamate release. Also acts as a regulator of hematopoietic stem cell differentiation by mediating degradation of hemoregulatory peptide N-acetyl-SDKP (AcSDKP). Acts as a regulator of cannabinoid signaling pathway by mediating degradation of hemopressin, an antagonist peptide of the cannabinoid receptor CNR1. Involved in amyloid-beta metabolism by catalyzing degradation of Amyloid-beta protein 40 and Amyloid-beta protein 42 peptides, thereby preventing plaque formation. Catalyzes cleavage of cholecystokinin (maturation of Cholecystokinin-8 and Cholecystokinin-5) and Gonadoliberin-1 (both maturation and degradation) hormones. Degradation of hemoregulatory peptide N-acetyl-SDKP (AcSDKP) and amyloid-beta proteins is mediated by the N-terminal catalytic domain, while angiotensin I and cholecystokinin cleavage is mediated by the C-terminal catalytic region. Its function is as follows. Soluble form that is released in blood plasma and other body fluids following proteolytic cleavage in the juxtamembrane stalk region. In Bos taurus (Bovine), this protein is Angiotensin-converting enzyme.